A 511-amino-acid chain; its full sequence is GMP synthase [glutamine-hydrolyzing] (511 aa).

The Glutamine amidotransferase type-1 domain occupies 5-195 (DILVLDFGSQ…AKYACNCDSV (191 aa)). The Nucleophile role is filled by Cys82. Residues His169 and Glu171 contribute to the active site. One can recognise a GMPS ATP-PPase domain in the interval 196 to 386 (WNMGSFAKTQ…LGLSKDVVYR (191 aa)). 223–229 (SGGVDSS) lines the ATP pocket.

In terms of assembly, homodimer.

The enzyme catalyses XMP + L-glutamine + ATP + H2O = GMP + L-glutamate + AMP + diphosphate + 2 H(+). It functions in the pathway purine metabolism; GMP biosynthesis; GMP from XMP (L-Gln route): step 1/1. Its function is as follows. Catalyzes the synthesis of GMP from XMP. The polypeptide is GMP synthase [glutamine-hydrolyzing] (Campylobacter lari (strain RM2100 / D67 / ATCC BAA-1060)).